The chain runs to 646 residues: Threonine--tRNA ligase (646 aa).

The 61-residue stretch at methionine 1–lysine 61 folds into the TGS domain. Residues aspartate 242–proline 541 are catalytic. Residues cysteine 337, histidine 388, and histidine 518 each contribute to the Zn(2+) site.

This sequence belongs to the class-II aminoacyl-tRNA synthetase family. As to quaternary structure, homodimer. Zn(2+) is required as a cofactor.

It is found in the cytoplasm. The enzyme catalyses tRNA(Thr) + L-threonine + ATP = L-threonyl-tRNA(Thr) + AMP + diphosphate + H(+). Functionally, catalyzes the attachment of threonine to tRNA(Thr) in a two-step reaction: L-threonine is first activated by ATP to form Thr-AMP and then transferred to the acceptor end of tRNA(Thr). Also edits incorrectly charged L-seryl-tRNA(Thr). The polypeptide is Threonine--tRNA ligase (Bacteroides thetaiotaomicron (strain ATCC 29148 / DSM 2079 / JCM 5827 / CCUG 10774 / NCTC 10582 / VPI-5482 / E50)).